Consider the following 480-residue polypeptide: MDELNACTECGFTTTVFSEFQGHIEKHENEHSRSSSGEMSNSQTIEWGDGIQSSTPSPRSTPPSDPTPSPDSDEHLEHHISITEITNTLIKKEPGTKGQKTVHVCPHCNFTTCMSQHMKSHLEAHERHQGQMYQCDICKMQFSQKANMHRHRMRHSGVKPYECRFCKKRFFRKDQMQEHSMTHIKTGFGFDCPVSQCNMQFSQHNALRAHLEETHTISSTNPASCKRCNLMFANSRRLLLHFQTRHDDSESSPKKENTPKRKKLSNGNALPMDPANMSITEQLQRMVKSEFSPPNTDTSDNSTSSEFDKIPPSFPMANPDILLMCLNQMNQFNGFGENIPRPMLNIPNIPLPALHNIPAVAAIVKQDQVQLWSEQTSSSVSVSAPSPSEQSHSPPANESSLSLTEKEKSPTPEKEDEENVECCHCGMMFYDNTMYLLHKSLHSDGDPFKCALCGTQCGEKYMFTTHVIFADHSTQATTSA.

The C2H2-type 1 zinc finger occupies 5 to 27; the sequence is NACTECGFTTTVFSEFQGHIEKH. Positions 25-75 are disordered; that stretch reads EKHENEHSRSSSGEMSNSQTIEWGDGIQSSTPSPRSTPPSDPTPSPDSDEH. Residues 34–45 show a composition bias toward polar residues; that stretch reads SSSGEMSNSQTI. The span at 59-69 shows a compositional bias: pro residues; that stretch reads RSTPPSDPTPS. C2H2-type zinc fingers lie at residues 103 to 125, 133 to 155, 161 to 183, 190 to 215, and 223 to 246; these read HVCPHCNFTTCMSQHMKSHLEAH, YQCDICKMQFSQKANMHRHRMRH, YECRFCKKRFFRKDQMQEHSMTH, FDCPVSQCNMQFSQHNALRAHLEETH, and ASCKRCNLMFANSRRLLLHFQTRH. 3 disordered regions span residues 243-275, 290-311, and 376-417; these read QTRHDDSESSPKKENTPKRKKLSNGNALPMDPA, EFSPPNTDTSDNSTSSEFDKIP, and TSSS…KEDE. Basic and acidic residues predominate over residues 244–259; it reads TRHDDSESSPKKENTP. Low complexity-rich tracts occupy residues 292–305 and 376–403; these read SPPNTDTSDNSTSS and TSSSVSVSAPSPSEQSHSPPANESSLSL. The segment covering 404-413 has biased composition (basic and acidic residues); sequence TEKEKSPTPE. 2 C2H2-type zinc fingers span residues 420 to 442 and 448 to 472; these read VECCHCGMMFYDNTMYLLHKSLH and FKCALCGTQCGEKYMFTTHVIFADH.

The protein belongs to the Ikaros C2H2-type zinc-finger protein family. As to expression, expressed in the somatic gonad, hypodermis and cells in the head and tail. Expressed in amphid and phasmid sheath glia, amphid and phasmid socket glia, and in neurons in the head.

The protein localises to the nucleus. Its function is as follows. Positively regulates the expression of ver-1 in the amphid sheath glia of amphid sensory neurons. Together with ehn-3, plays a role in somatic gonad development and is required for proper gonadal primordium assembly and somatic gonad precursor cell morphology. The polypeptide is Zinc finger protein ztf-16 (Caenorhabditis elegans).